Reading from the N-terminus, the 582-residue chain is Nif-specific regulatory protein (582 aa).

A compositionally biased stretch (polar residues) spans 1-11 (MLHIPSSSERP). Residues 1–28 (MLHIPSSSERPASQPEPERAPPGEPSHE) form a disordered region. Over residues 16–27 (EPERAPPGEPSH) the composition is skewed to basic and acidic residues. The 143-residue stretch at 46-188 (RLEVTLANVL…MVANVIGQTI (143 aa)) folds into the GAF domain. The Sigma-54 factor interaction domain maps to 230-458 (IIGDSPALSA…LENCIERTAT (229 aa)). ATP contacts are provided by residues 258–265 (GESGTGKE) and 321–330 (ADKGTLFLDE). The inter-domain linker stretch occupies residues 459–539 (LSAGTSIVRS…VLVSGARMAD (81 aa)). Cys472 and Cys477 together coordinate a divalent metal cation. The tract at residues 540 to 582 (RERVVAAMEKSGWVQAKAARLLGLTPRQVGYALRKYGIEIKRF) is C-terminal DNA-binding domain. Residues 554–573 (QAKAARLLGLTPRQVGYALR) constitute a DNA-binding region (H-T-H motif).

As to quaternary structure, interacts with sigma-54.

Its function is as follows. Required for activation of most nif operons, which are directly involved in nitrogen fixation. This is Nif-specific regulatory protein (nifA) from Bradyrhizobium diazoefficiens (strain JCM 10833 / BCRC 13528 / IAM 13628 / NBRC 14792 / USDA 110).